Reading from the N-terminus, the 437-residue chain is GTPase Der (437 aa).

2 consecutive EngA-type G domains span residues 3-168 and 178-353; these read PLIA…PETE and IQLA…QNRS. Residues 9–16, 56–60, 120–123, 184–191, 231–235, and 296–299 each bind GTP; these read GRPNVGKS, DTGGY, NKVE, DTAGL, and NKWD. Residues 354–437 form the KH-like domain; it reads RKISTSVLNK…VPISMRFMQK (84 aa).

It belongs to the TRAFAC class TrmE-Era-EngA-EngB-Septin-like GTPase superfamily. EngA (Der) GTPase family. In terms of assembly, associates with the 50S ribosomal subunit.

GTPase that plays an essential role in the late steps of ribosome biogenesis. The polypeptide is GTPase Der (Pelodictyon phaeoclathratiforme (strain DSM 5477 / BU-1)).